The sequence spans 346 residues: MDYKTAGVDVTAGRAFVERIKSCVEKTHKSEVIGGLGGFGGCIRIPKGFESPVLVSGTDGVGTKLELAQQYGCHFGVGIDLVAMCVNDVITNGARPLFFLDYIASGTLTPDALAEVIEGIAAGCCQSDCSLLGGETAEMPGFYPSGRYDLAGFCVGIVENHHLIDGTKINCGDQIIGIKSNGVHSNGFSLVRKVLSMANVDENTLYGKDKRNLIQSLLEPTAIYVQLVEKLLRENLPIHGMTHITGGGLPENLPRIFPSGLLPHIDITTWEITEIFNWLQNAGDIPEIDLWNTFNMGIGFCLIVPKNEVNSALEICMKNDFEAWNIGQVVESQNNSKHSGILGIPS.

It belongs to the AIR synthase family.

The protein resides in the cytoplasm. The catalysed reaction is 2-formamido-N(1)-(5-O-phospho-beta-D-ribosyl)acetamidine + ATP = 5-amino-1-(5-phospho-beta-D-ribosyl)imidazole + ADP + phosphate + H(+). It participates in purine metabolism; IMP biosynthesis via de novo pathway; 5-amino-1-(5-phospho-D-ribosyl)imidazole from N(2)-formyl-N(1)-(5-phospho-D-ribosyl)glycinamide: step 2/2. This chain is Phosphoribosylformylglycinamidine cyclo-ligase, found in Prochlorococcus marinus (strain NATL1A).